Reading from the N-terminus, the 978-residue chain is Serine/threonine-protein kinase PLK4 (978 aa).

Residues 13–266 (FQVLDLLGKG…LSGILDHPFI (254 aa)) enclose the Protein kinase domain. Residues 19 to 27 (LGKGGFACV) and K42 each bind ATP. D137 acts as the Proton acceptor in catalysis. Composition is skewed to polar residues over residues 271–282 (LNTKYSSPTRQH) and 291–304 (SLDS…TIST). 4 disordered regions span residues 271 to 381 (LNTK…TRTS), 489 to 578 (IEQP…AERL), 788 to 818 (AWKN…SSPS), and 838 to 869 (AQTT…QPIP). The segment covering 324 to 335 (RTSDIWPRDPKH) has biased composition (basic and acidic residues). Polar residues-rich tracts occupy residues 351-362 (TENVTTGSSSHV) and 371-381 (AQYSGLKTRTS). Composition is skewed to basic and acidic residues over residues 518 to 527 (GSDSVSKDFD) and 536 to 566 (ESRR…DKSL). The Cryptic POLO box 1 (CPB1) domain occupies 565-678 (SLGELTEPLN…AKFVQLVRKL (114 aa)). The 114-residue stretch at 679 to 792 (TPKVTLYSKH…GRRPPAWKNS (114 aa)) folds into the Cryptic POLO box 2 (CPB2) domain. Polar residues predominate over residues 801 to 818 (QQGCSNGQSQPVLPSSPS). The segment covering 848–862 (KSRKTSPSKTSRHKQ) has biased composition (basic residues). The POLO box domain occupies 895–973 (HVCKMAFVDG…LPAVIKTLAT (79 aa)).

The protein belongs to the protein kinase superfamily. Ser/Thr protein kinase family. CDC5/Polo subfamily. Homodimer. In terms of processing, ubiquitinated; leading to its degradation by the proteasome.

The protein localises to the cytoplasm. It is found in the cytoskeleton. Its subcellular location is the microtubule organizing center. The protein resides in the centrosome. It localises to the centriole. The catalysed reaction is L-seryl-[protein] + ATP = O-phospho-L-seryl-[protein] + ADP + H(+). It catalyses the reaction L-threonyl-[protein] + ATP = O-phospho-L-threonyl-[protein] + ADP + H(+). Serine/threonine-protein kinase that plays a central role in centriole duplication. Able to trigger procentriole formation on the surface of the mother centriole cylinder, leading to the recruitment of centriole biogenesis proteins. When overexpressed, it is able to induce centrosome amplification through the simultaneous generation of multiple procentrioles adjoining each parental centriole during S phase. In Nematostella vectensis (Starlet sea anemone), this protein is Serine/threonine-protein kinase PLK4.